A 113-amino-acid polypeptide reads, in one-letter code: UPF0212 protein AF_0282 (113 aa).

Belongs to the UPF0212 family.

The protein is UPF0212 protein AF_0282 of Archaeoglobus fulgidus (strain ATCC 49558 / DSM 4304 / JCM 9628 / NBRC 100126 / VC-16).